The primary structure comprises 594 residues: Protein HOTHEAD (594 aa).

Residues 1–19 form the signal peptide; sequence MALKLFLFALLLCLPTSLS. 64-91 contributes to the FAD binding site; it reads DYIVIGGGTAGCPLAATLSQNFSVLVLE. The active-site Proton acceptor is the His529.

The protein belongs to the GMC oxidoreductase family. It depends on FAD as a cofactor. Expressed in roots, leaves, stems, inflorescences and siliques. Found not only in epidermis but also in all sub-epidermal cell layers.

Functionally, probable FAD-dependent enzyme. Involved in regulating post-genital organ fusion. Required to limit cellular interactions between contacting epidermal cells during floral development. The chain is Protein HOTHEAD (HTH) from Arabidopsis thaliana (Mouse-ear cress).